The primary structure comprises 174 residues: CEN-like protein 1 (174 aa).

This sequence belongs to the phosphatidylethanolamine-binding protein family. In terms of tissue distribution, expressed in vegetative axillary meristems but not in the main shoot meristem.

Its subcellular location is the cytoplasm. Its function is as follows. May form complexes with phosphorylated ligands by interfering with kinases and their effectors. This chain is CEN-like protein 1 (CET1), found in Nicotiana tabacum (Common tobacco).